The primary structure comprises 115 residues: Large ribosomal subunit protein uL24 (115 aa).

The protein belongs to the universal ribosomal protein uL24 family. In terms of assembly, part of the 50S ribosomal subunit.

One of two assembly initiator proteins, it binds directly to the 5'-end of the 23S rRNA, where it nucleates assembly of the 50S subunit. In terms of biological role, one of the proteins that surrounds the polypeptide exit tunnel on the outside of the subunit. This chain is Large ribosomal subunit protein uL24, found in Deinococcus deserti (strain DSM 17065 / CIP 109153 / LMG 22923 / VCD115).